Reading from the N-terminus, the 853-residue chain is MKAEQQHTPMMQQYLRLKAENPDILLFYRMGDFYELFYDDAKKASQLLDISLTKRGASAGEPIPMAGVPFHAVEGYLAKLVQLGESVAICEQVGDPATSKGPVERKVVRIVTPGTVTDEALLSERLDNLIAAIYHHNGKFGYATLDVTSGRFQLVEPQSEEAMAAELQRTSPRELLFPEDFEPVHLMTGRNGNRRRPVWEFELETAKQQLNQQFGTKDLVGFGVENAMLGLCAAGCLIQYVKDTQRTALPHIRALTYDRQDDSVILDAATRRNLELTQNLAGGSDNTLAAVLDRCATPMGSRMLKRWIHQPMRCITTREHRLDAIAELKEQALFSDIHPVVKQIGDIERILARLALRSARPRDLARLRHAMQQLPELAQTLSSLGNSHLKSLATAAAPMDDVCELLERAIKENPPVVIRDGGVIAEGYSADLDEWRDLADGATGYLEKLEEEERDRHGIDTLKVGYNNVHGFYIQVSRGQSHLVPPHYVRRQTLKNAERYIIPELKEHEDKVLNSKSKALAIEKQLWEELFDLLLPHLARLQELAAAVAQLDVLQNLAERADTLDYCRPNLTKDPVVHITAGRHPVVEQVTSDPFIANPIELNSQRKMLIITGPNMGGKSTYMRQTALIALMAHIGSYVPAESATIGSIDRIFTRIGASDDLASGRSTFMVEMTETANILHNATANSLVLMDEIGRGTSTYDGLSLAWASAHWLATQIGAMTLFATHYFELTELPNQLPHLANVHLDAVEHGDSIAFMHAVQEGAASKSYGLAVAGLAGVPKTVIKNARQKLSQLELLSAEGSQPKARTVDIANQLSLIPEPSEVEQALASIDPDDLTPRQALEALYRLKKML.

An ATP-binding site is contributed by 613–620 (GPNMGGKS).

This sequence belongs to the DNA mismatch repair MutS family.

In terms of biological role, this protein is involved in the repair of mismatches in DNA. It is possible that it carries out the mismatch recognition step. This protein has a weak ATPase activity. The polypeptide is DNA mismatch repair protein MutS (Vibrio vulnificus (strain YJ016)).